Here is a 126-residue protein sequence, read N- to C-terminus: Large ribosomal subunit protein bL12 (126 aa).

The protein belongs to the bacterial ribosomal protein bL12 family. As to quaternary structure, homodimer. Part of the ribosomal stalk of the 50S ribosomal subunit. Forms a multimeric L10(L12)X complex, where L10 forms an elongated spine to which 2 to 4 L12 dimers bind in a sequential fashion. Binds GTP-bound translation factors.

Functionally, forms part of the ribosomal stalk which helps the ribosome interact with GTP-bound translation factors. Is thus essential for accurate translation. The protein is Large ribosomal subunit protein bL12 of Bifidobacterium longum subsp. infantis (strain ATCC 15697 / DSM 20088 / JCM 1222 / NCTC 11817 / S12).